The sequence spans 1145 residues: DNA polymerase subunit gamma-1, mitochondrial (1145 aa).

A mitochondrion-targeting transit peptide spans 1-9 (MQFHLIRKY).

It belongs to the DNA polymerase type-A family. In terms of assembly, component of the DNA polymerase gamma complex consisting of two subunits: the catalytic subunit DNApol-gamma/DNApolG1 and the accessory subunit PolG2/DNApol-gamma35. Mg(2+) is required as a cofactor.

Its subcellular location is the mitochondrion. It catalyses the reaction DNA(n) + a 2'-deoxyribonucleoside 5'-triphosphate = DNA(n+1) + diphosphate. With respect to regulation, stimulated by KCl, and inhibited by the small molecules o 2',3'-dideoxythymidine 5'-triphosphate (d2TTP) and N-ethylmaleimide (NEM). As the catalytic component of the DNA polymerase gamma complex is involved in the replication of mitochondrial DNA (mtDNA). Has both 5'-3' DNA polymerase and a highly mispair-specific 3'-5' exonuclease activity. At the end of mtDNA replication DNA ends are ligated to produce a closed circular mtDNA molecule, its exonuclease activity is required for formation of these ligatable ends by preventing DNA synthesis from continuing past the 5'-end of downstream DNA into duplex DNA regions. Does not possess DNA primase activity, does not catalyze strand displacement synthesis and does not contain a 5'-3' exonuclease activity to catalyze nick translation. Important for promoting the elimination of paternal mitochondrial DNA during spermatogenesis, however its exact role in this function has not yet been identified and appears to be independent of its 3'-5'-exonuclease activity and only partially dependent on its DNA polymerase activity. This is DNA polymerase subunit gamma-1, mitochondrial from Drosophila melanogaster (Fruit fly).